We begin with the raw amino-acid sequence, 172 residues long: Small ribosomal subunit protein uS13 (172 aa).

Residues 131–172 are disordered; that stretch reads GQRTRTTGRTGVTVGVRRSKAAQAAQQQQKAQASSGGEKKQG. A compositionally biased stretch (low complexity) spans 134-163; sequence TRTTGRTGVTVGVRRSKAAQAAQQQQKAQA.

Belongs to the universal ribosomal protein uS13 family. Part of the 30S ribosomal subunit. Forms a loose heterodimer with protein S19. Forms two bridges to the 50S subunit in the 70S ribosome.

Located at the top of the head of the 30S subunit, it contacts several helices of the 16S rRNA. In the 70S ribosome it contacts the 23S rRNA (bridge B1a) and protein L5 of the 50S subunit (bridge B1b), connecting the 2 subunits; these bridges are implicated in subunit movement. The polypeptide is Small ribosomal subunit protein uS13 (Sulfurisphaera tokodaii (strain DSM 16993 / JCM 10545 / NBRC 100140 / 7) (Sulfolobus tokodaii)).